The following is a 434-amino-acid chain: MEDIGKAGFFSDKSIGTGENTPLLDSYTFDFDSGPYGGAHYTITGVPDMSTGFSTFAGTGLSATEMGYCYPFGVDPSSRGDGSIHPPKCRYEKSIMQVHPESGDLGMQGATLFPSSPTSLESVRKRALDLHCFLFTQLHCVTDEDLAEAILSPFIFSESVKEPTGPRANIIQRLIYASECLLGLISTLSFLWTGCEDSGNSPPASMANQQGPQFQFPSRTQHKSNSVLAQHLLGLAGRSLHLEDSANFTGRQHTASPSETSVVDLPTITTILTCHVGILSVYRYTFSRIHDALRACGSSPSGTPESELTSPHKRATTCSPLPNKDTLPLNMPFVLGLRVQLEIMTHMLDRMRAAWATAMEDHPGHEDHQQQQEEVKQHDRLSHHKRATLATLKSMLALNGHELSNQDGGTGIGAVGDLGDRVRRLLRNCDKGMY.

Disordered regions lie at residues 297–321 (GSSPSGTPESELTSPHKRATTCSPL) and 362–383 (HPGHEDHQQQQEEVKQHDRLSH). The span at 298–309 (SSPSGTPESELT) shows a compositional bias: polar residues. The span at 362–380 (HPGHEDHQQQQEEVKQHDR) shows a compositional bias: basic and acidic residues.

Its subcellular location is the nucleus. Functionally, transcription factor probably involved in regulation of gene cluster that mediates the biosynthesis of a tyrosine-derived cytochalasan acting as a fungal signal recognized by resistant rice plants and leads to avirulence in Pi33 resistant rice cultivars. This Pyricularia oryzae (strain 70-15 / ATCC MYA-4617 / FGSC 8958) (Rice blast fungus) protein is Pyrichalasin H cluster regulator BC2.